The chain runs to 217 residues: Cytidylate kinase (217 aa).

9 to 17 is an ATP binding site; sequence GPAASGKSS.

It belongs to the cytidylate kinase family. Type 1 subfamily.

It is found in the cytoplasm. The enzyme catalyses CMP + ATP = CDP + ADP. It catalyses the reaction dCMP + ATP = dCDP + ADP. The chain is Cytidylate kinase from Bdellovibrio bacteriovorus (strain ATCC 15356 / DSM 50701 / NCIMB 9529 / HD100).